The chain runs to 81 residues: UPF0298 protein SAK_1599 (81 aa).

It belongs to the UPF0298 family.

Its subcellular location is the cytoplasm. The chain is UPF0298 protein SAK_1599 from Streptococcus agalactiae serotype Ia (strain ATCC 27591 / A909 / CDC SS700).